The following is a 1047-amino-acid chain: Protein masquerade (1047 aa).

A signal peptide spans 1–30 (MPRHSSTMSRLVLPLIFSILLVSKPSPSQA). The CLIP 1 stretch occupies residues 54–87 (KDCPGVCVHTLATLICYEVLDDVACPSPSMKCCI). 3 cysteine pairs are disulfide-bonded: Cys56-Cys85, Cys60-Cys78, and Cys69-Cys86. Asn95 carries an N-linked (GlcNAc...) asparagine glycan. Composition is skewed to low complexity over residues 98 to 139 (AVRA…STTP) and 148 to 175 (KRPATSSTTKATVATTKKPSTTKKVATA). The segment at 98 to 189 (AVRATTTPKT…KEEATKADDA (92 aa)) is disordered. Residues 176–189 (KPKDKEEATKADDA) are compositionally biased toward basic and acidic residues. The interval 192–224 (DCTGVCVADRIAEYCEAYLTSDGLCKEGTKCCV) is CLIP 2. 3 disulfide bridges follow: Cys193–Cys222, Cys197–Cys216, and Cys206–Cys223. Asn251 is a glycosylation site (N-linked (GlcNAc...) asparagine). A disordered region spans residues 252 to 335 (QTLSEKSAPA…PLSNKLKSGQ (84 aa)). Positions 263–280 (SSSTSTTSTTTTTSTTTT) are enriched in low complexity. Residue Asn287 is glycosylated (N-linked (GlcNAc...) asparagine). Residues 307-325 (AAEEEEEQETEEDGEEEEP) are compositionally biased toward acidic residues. The CLIP 3 stretch occupies residues 343 to 374 (ECEGECMNGIFAIFCDDIDSDAFCPGEESCCV). Intrachain disulfides connect Cys344/Cys372, Cys348/Cys366, and Cys357/Cys373. The interval 376 to 428 (GGASEATPSSKAPPTKPAIKHAPKPAAKPARPASPPPAPPSSTSGGGGGGDFL) is disordered. The tract at residues 457–492 (RCPGFCLLNIMAAFCERPSVLVSTPTTCAKGSVCCD) is CLIP 4. 3 disulfide bridges follow: Cys458-Cys490, Cys462-Cys484, and Cys471-Cys491. The interval 498 to 527 (APKPKLPPPTPSPTASPTAPPYVLPNTPSP) is disordered. Over residues 501 to 527 (PKLPPPTPSPTASPTAPPYVLPNTPSP) the composition is skewed to pro residues. Residues 532 to 567 (ECPGSCIVSLLSFTCFKNAEMTDLFRCKRSGQICCA) form a CLIP 5 region. Disulfide bonds link Cys533/Cys565, Cys537/Cys558, and Cys546/Cys566. A glycan (N-linked (GlcNAc...) asparagine) is linked at Asn582. The disordered stretch occupies residues 583-673 (DTAYYPAPPP…TTTTTTTTPR (91 aa)). Composition is skewed to pro residues over residues 588-606 (PAPPPPPIGPPQAYPPQTP), 613-638 (NPPPQGPPPQMAPHHPNPYQPPPPAP), and 650-661 (GLPPQPQPPMTT). The segment covering 662–672 (PPTTTTTTTTP) has biased composition (low complexity). 5 cysteine pairs are disulfide-bonded: Cys682–Cys916, Cys829–Cys845, Cys930–Cys1001, Cys961–Cys981, and Cys991–Cys1019. 2 N-linked (GlcNAc...) asparagine glycosylation sites follow: Asn726 and Asn794. Positions 803 to 1043 (VVGGEDGENG…FIGWINQIIS (241 aa)) are peptidase S1.

This sequence belongs to the peptidase S1 family. CLIP subfamily. Post-translationally, proteolytically cleaved and thereafter secreted.

The protein resides in the secreted. It is found in the cell projection. Its subcellular location is the axon. In terms of biological role, in embryogenesis, has a role in somatic muscle attachment and in the development of axonal pathways probably by stabilizing cell-matrix adhesion and/or by acting as a competitive antagonist of serine proteases. The sequence is that of Protein masquerade from Drosophila melanogaster (Fruit fly).